Here is a 921-residue protein sequence, read N- to C-terminus: Translation initiation factor IF-2 (921 aa).

The disordered stretch occupies residues 1–296 (MADNNTPGDK…PGPQKQRGRL (296 aa)). Residues 80 to 89 (RPSGPRPGSS) are compositionally biased toward low complexity. Over residues 116–182 (ARVRDMEERR…AKKRFGEGEA (67 aa)) the composition is skewed to basic and acidic residues. Low complexity predominate over residues 183–257 (PRPATAAPQQ…LGRAPGVAAG (75 aa)). Positions 417–586 (PRSPVVTVMG…MIALQADILD (170 aa)) constitute a tr-type G domain. A G1 region spans residues 426-433 (GHVDHGKT). Residue 426 to 433 (GHVDHGKT) coordinates GTP. Residues 451 to 455 (GITQH) are G2. A G3 region spans residues 474–477 (DTPG). Residues 474–478 (DTPGH) and 528–531 (NKID) each bind GTP. The segment at 528-531 (NKID) is G4. Residues 564 to 566 (SAK) are G5.

Belongs to the TRAFAC class translation factor GTPase superfamily. Classic translation factor GTPase family. IF-2 subfamily.

It localises to the cytoplasm. Functionally, one of the essential components for the initiation of protein synthesis. Protects formylmethionyl-tRNA from spontaneous hydrolysis and promotes its binding to the 30S ribosomal subunits. Also involved in the hydrolysis of GTP during the formation of the 70S ribosomal complex. This is Translation initiation factor IF-2 from Bradyrhizobium sp. (strain BTAi1 / ATCC BAA-1182).